The following is a 155-amino-acid chain: Ribosomal RNA large subunit methyltransferase H (155 aa).

S-adenosyl-L-methionine is bound by residues L72, G103, and 122 to 127 (LSALTL).

It belongs to the RNA methyltransferase RlmH family. In terms of assembly, homodimer.

The protein resides in the cytoplasm. The enzyme catalyses pseudouridine(1915) in 23S rRNA + S-adenosyl-L-methionine = N(3)-methylpseudouridine(1915) in 23S rRNA + S-adenosyl-L-homocysteine + H(+). Specifically methylates the pseudouridine at position 1915 (m3Psi1915) in 23S rRNA. This Citrobacter koseri (strain ATCC BAA-895 / CDC 4225-83 / SGSC4696) protein is Ribosomal RNA large subunit methyltransferase H.